We begin with the raw amino-acid sequence, 163 residues long: Nucleotide-binding protein ROP_16630 (163 aa).

Belongs to the YajQ family.

Its function is as follows. Nucleotide-binding protein. The protein is Nucleotide-binding protein ROP_16630 of Rhodococcus opacus (strain B4).